The following is a 140-amino-acid chain: MIIGFGNDLCDIRRIEESLARFGERFIARCFTDIERRKSEGRPSRAASYAKRFAAKEACAKALGTGLTQGVFWRDMGVVNLPSGKPTLALTGGAAERLALLTPPGLTAIIHLTLTDEFPLAQAQVIIEAVASEASFRPMT.

Positions 8 and 57 each coordinate Mg(2+).

The protein belongs to the P-Pant transferase superfamily. AcpS family. The cofactor is Mg(2+).

The protein localises to the cytoplasm. It carries out the reaction apo-[ACP] + CoA = holo-[ACP] + adenosine 3',5'-bisphosphate + H(+). Its function is as follows. Transfers the 4'-phosphopantetheine moiety from coenzyme A to a Ser of acyl-carrier-protein. The polypeptide is Holo-[acyl-carrier-protein] synthase (Beijerinckia indica subsp. indica (strain ATCC 9039 / DSM 1715 / NCIMB 8712)).